A 431-amino-acid chain; its full sequence is PHD finger-containing protein 1 (431 aa).

The segment at 7 to 59 (GPVCQTCGDIGFEEALVFCDSCMFESIHRYCLGITPIPFTEYITWICEDCDNS) adopts a PHD-type zinc-finger fold. Positions 10, 13, 25, 28, 34, 37, 53, and 56 each coordinate Zn(2+). The interval 125 to 221 (EAADSSSVPD…QESSDSRKPH (97 aa)) is disordered. The segment covering 128-139 (DSSSVPDHSSCT) has biased composition (polar residues). The segment covering 160–171 (KKKKKKKKKKSI) has biased composition (basic residues). Low complexity predominate over residues 191-202 (VVEPVEVSSSSP). Residues 205–221 (ETMESKRQESSDSRKPH) show a composition bias toward basic and acidic residues.

As to quaternary structure, interacts directly with AIPP3/BDT1.

In terms of biological role, together with AIPP3/BDT1, cooperates to form a BAH-PHD bivalent histone reader complex able to read histone H3 lysine 27 trimethylation (H3K27me3) histone marks in order to regulate transcription, especially to prevent early flowering; promotes AIPP3/BDT1 binding to H3K27me3. This Arabidopsis thaliana (Mouse-ear cress) protein is PHD finger-containing protein 1.